Reading from the N-terminus, the 322-residue chain is Sideroflexin fsf1 (322 aa).

4 helical membrane-spanning segments follow: residues 143–163 (SYIY…KIVP), 175–195 (VLGR…NVFL), 229–249 (TALS…LVLM), and 269–289 (LGLI…VFPA).

Belongs to the sideroflexin family.

It localises to the mitochondrion membrane. Mitochondrial amino-acid transporter that mediates transport of serine into mitochondria. The protein is Sideroflexin fsf1 of Schizosaccharomyces pombe (strain 972 / ATCC 24843) (Fission yeast).